The chain runs to 1761 residues: Nonribosomal peptide synthetase 6 (1761 aa).

Residues 63–468 form an adenylation region; it reads ERAALHPEKI…GRQDQQVKLR (406 aa). The 76-residue stretch at 600–675 folds into the Carrier 1 domain; sequence EATTEMELKL…SMAEKAKPVS (76 aa). Serine 636 carries the O-(pantetheine 4'-phosphoryl)serine modification. The interval 712–1135 is condensation 1; the sequence is VEDVYPCTPL…AVLDPVEAQD (424 aa). 2 consecutive Carrier domains span residues 1169 to 1242 and 1237 to 1313; these read SPNE…SNER and SASN…EEET. 2 positions are modified to O-(pantetheine 4'-phosphoryl)serine: serine 1203 and serine 1274. The segment at 1354–1677 is condensation 2; sequence IYPTRPLQQL…ESVQWFDTVV (324 aa).

It belongs to the NRP synthetase family.

It functions in the pathway siderophore biosynthesis. Functionally, nonribosomal peptide synthetase; part of the gene cluster that mediates the biosynthesis of hydroxamate-containing siderophores that play a critical role in virulence. Cochliobolus heterostrophus produces extracellular coprogen-type siderophores including coprogen, neocoprogen I and neocoprogen II, as well as the intracellular siderophore ferricrocin. The role of extracellular siderophores is to supply iron to the fungus during plant infection, and the intracellular ferricrocin is required for intracellular iron distribution and storage with a crucial role in ascus and ascospore development. SIDA2 catalyzes the conversion of L-ornithine to N(5)-hydroxyornithine, the first step in the biosynthesis of all hydroxamate-containing siderophores. The assembly of extracellular coprogen-type siderophores is then performed by the nonribosomal peptide synthetase (NRPS) NPS6 whereas the intracellular siderophore ferricrocin is assembled by NPS2. In Cochliobolus heterostrophus (strain C4 / ATCC 48331 / race T) (Southern corn leaf blight fungus), this protein is Nonribosomal peptide synthetase 6.